A 151-amino-acid chain; its full sequence is Ribosome maturation factor RimP (151 aa).

The protein belongs to the RimP family.

Its subcellular location is the cytoplasm. In terms of biological role, required for maturation of 30S ribosomal subunits. The sequence is that of Ribosome maturation factor RimP from Shewanella frigidimarina (strain NCIMB 400).